Consider the following 254-residue polypeptide: Chaperone protein PmfD (254 aa).

A signal peptide spans 1-26; the sequence is MNSFSTLKTLFCGSLLALSLVNTTQA.

It belongs to the periplasmic pilus chaperone family.

Its subcellular location is the periplasm. In terms of biological role, involved in the biogenesis of the PMF fimbria. The sequence is that of Chaperone protein PmfD (pmfD) from Proteus mirabilis (strain HI4320).